The following is a 287-amino-acid chain: MIADKLFEKVEKNGVVCVGLDTSLDYIPEEFKSKFSNESDMLFAFNKEIIDATLDVSACFKVQIAYYEALGLKGLEAYKNTLSYLREKNALIIADIKRGDIAATAKMYAKAHFEGDFESDFITLNPYMGMDSIDPYLPYIEKNEKGVFVLVRTSNKGAEDIEYLEAGHGKKVYDVVGEKLNTLGKNYLGKHGYSSIGGVVGCTHQEEAKEMRDKLDTMPFLIPGYGAQGGTAKDVAAYLKNGNGGIVNSSRKILLAYKAMEDNKNFAECARKEAISMRDSIREAILK.

Lys-97 (proton donor) is an active-site residue.

It belongs to the OMP decarboxylase family. Type 2 subfamily.

The enzyme catalyses orotidine 5'-phosphate + H(+) = UMP + CO2. Its pathway is pyrimidine metabolism; UMP biosynthesis via de novo pathway; UMP from orotate: step 2/2. This is Orotidine 5'-phosphate decarboxylase (pyrF) from Clostridium perfringens (strain 13 / Type A).